The primary structure comprises 585 residues: Clathrin heavy chain linker domain-containing protein 1 (585 aa).

Residues 118 to 239 (QLEAKMRIID…DLRFRHQRLQ (122 aa)) adopt a coiled-coil conformation.

The sequence is that of Clathrin heavy chain linker domain-containing protein 1 (Clhc1) from Rattus norvegicus (Rat).